The sequence spans 206 residues: Thymidylate kinase (206 aa).

7-14 is an ATP binding site; the sequence is GGEGVGKT.

Belongs to the thymidylate kinase family.

It carries out the reaction dTMP + ATP = dTDP + ADP. In terms of biological role, phosphorylation of dTMP to form dTDP in both de novo and salvage pathways of dTTP synthesis. The protein is Thymidylate kinase of Synechococcus sp. (strain JA-2-3B'a(2-13)) (Cyanobacteria bacterium Yellowstone B-Prime).